The chain runs to 187 residues: Protein McbG (187 aa).

The protein belongs to the pentapeptide repeat protein family.

Together with proteins McbE and McbF this protein causes immunity to the peptide antibiotic microcin B17 (MccB17), which inhibits DNA replication in Enterobacteriaceae by induction of the SOS repair system. McbG alone can provide some protection. In Escherichia coli, this protein is Protein McbG (mcbG).